A 259-amino-acid chain; its full sequence is Ribosomal RNA small subunit methyltransferase A (259 aa).

Positions 15, 17, 41, 62, 86, and 105 each coordinate S-adenosyl-L-methionine.

The protein belongs to the class I-like SAM-binding methyltransferase superfamily. rRNA adenine N(6)-methyltransferase family. RsmA subfamily.

It localises to the cytoplasm. The catalysed reaction is adenosine(1518)/adenosine(1519) in 16S rRNA + 4 S-adenosyl-L-methionine = N(6)-dimethyladenosine(1518)/N(6)-dimethyladenosine(1519) in 16S rRNA + 4 S-adenosyl-L-homocysteine + 4 H(+). Specifically dimethylates two adjacent adenosines (A1518 and A1519) in the loop of a conserved hairpin near the 3'-end of 16S rRNA in the 30S particle. May play a critical role in biogenesis of 30S subunits. The protein is Ribosomal RNA small subunit methyltransferase A of Mycoplasmopsis synoviae (strain 53) (Mycoplasma synoviae).